A 147-amino-acid chain; its full sequence is D-aminoacyl-tRNA deacylase (147 aa).

A Gly-cisPro motif, important for rejection of L-amino acids motif is present at residues 136–137 (GP).

This sequence belongs to the DTD family. As to quaternary structure, homodimer.

It localises to the cytoplasm. The catalysed reaction is glycyl-tRNA(Ala) + H2O = tRNA(Ala) + glycine + H(+). It carries out the reaction a D-aminoacyl-tRNA + H2O = a tRNA + a D-alpha-amino acid + H(+). An aminoacyl-tRNA editing enzyme that deacylates mischarged D-aminoacyl-tRNAs. Also deacylates mischarged glycyl-tRNA(Ala), protecting cells against glycine mischarging by AlaRS. Acts via tRNA-based rather than protein-based catalysis; rejects L-amino acids rather than detecting D-amino acids in the active site. By recycling D-aminoacyl-tRNA to D-amino acids and free tRNA molecules, this enzyme counteracts the toxicity associated with the formation of D-aminoacyl-tRNA entities in vivo and helps enforce protein L-homochirality. This is D-aminoacyl-tRNA deacylase from Streptococcus equi subsp. zooepidemicus (strain H70).